Reading from the N-terminus, the 1668-residue chain is Kinesin-like protein KIF21B (1668 aa).

A Kinesin motor domain is found at 8–371 (CVKVAVRIRP…LKYANRARNI (364 aa)). Residue 87–94 (GQTGAGKT) participates in ATP binding. The stretch at 372 to 465 (KNKVVVNQDK…LMSQEANLLL (94 aa)) forms a coiled coil. An interaction with TRIM3 region spans residues 401 to 1100 (MEYKAGKRVI…LQALIYNVQH (700 aa)). Disordered regions lie at residues 553–629 (KKKE…PEEK) and 837–866 (RVGL…GARS). Acidic residues predominate over residues 579–628 (NSEETDENEAEEEEEERDESGCEEEEGREDEDEDSGSEESLVDSDSDPEE). A Phosphoserine modification is found at Ser580. The residue at position 583 (Thr583) is a Phosphothreonine. Over residues 847-866 (SGAEVSASTTSSEAESGARS) the composition is skewed to low complexity. Residues 924 to 1019 (IIDIVMQRMT…TKEELDSTDT (96 aa)) are a coiled coil. Phosphoserine occurs at positions 1150, 1168, and 1217. Residues 1199 to 1219 (LPTRGSTFPRQSRGATDTSPL) show a composition bias toward polar residues. Positions 1199–1253 (LPTRGSTFPRQSRGATDTSPLTRRKSYDRGQPIRSTDMGFTPPSSPPTRPRNDRN) are disordered. Thr1239 is subject to Phosphothreonine. Ser1243 is subject to Phosphoserine. WD repeat units follow at residues 1308–1345 (GHTK…EIAA), 1348–1386 (GHPN…KCIR), 1412–1450 (QGEH…PIGK), 1453–1495 (GHIG…TGTI), 1504–1541 (PHYD…LIQQ), 1545–1584 (AHKD…PIGE), and 1587–1624 (GHDS…TPCL).

The protein belongs to the TRAFAC class myosin-kinesin ATPase superfamily. Kinesin family. Interacts with TRIM3; the interaction positively affects motility of KIF21B. Interacts with GABARAP and GABA(A) receptor subunits: GABRG2, GABRA1 and GABRA2. May interact with GABA(A) receptor subunits: GABRB2 and GABRB3. As to expression, expressed in brain (at protein level). Expressed in spleen and at lower levels in testes.

Its subcellular location is the cytoplasm. It is found in the cytoskeleton. The protein localises to the cell projection. It localises to the dendrite. The protein resides in the growth cone. Its subcellular location is the axon. It is found in the cytoplasmic vesicle. In terms of biological role, plus-end directed microtubule-dependent motor protein which displays processive activity. Is involved in regulation of microtubule dynamics, synapse function and neuronal morphology, including dendritic tree branching and spine formation. Plays a role in lerning and memory. Involved in delivery of gamma-aminobutyric acid (GABA(A)) receptor to cell surface. This chain is Kinesin-like protein KIF21B (Kif21b), found in Mus musculus (Mouse).